A 125-amino-acid chain; its full sequence is Fluoride-specific ion channel FluC (125 aa).

4 helical membrane-spanning segments follow: residues Ala-6–Val-26, Trp-36–Ala-56, Phe-68–Ala-88, and Trp-97–Leu-117. Gly-76 and Thr-79 together coordinate Na(+).

This sequence belongs to the fluoride channel Fluc/FEX (TC 1.A.43) family.

Its subcellular location is the cell inner membrane. The catalysed reaction is fluoride(in) = fluoride(out). With respect to regulation, na(+) is not transported, but it plays an essential structural role and its presence is essential for fluoride channel function. Its function is as follows. Fluoride-specific ion channel. Important for reducing fluoride concentration in the cell, thus reducing its toxicity. This chain is Fluoride-specific ion channel FluC, found in Nitrosococcus oceani (strain ATCC 19707 / BCRC 17464 / JCM 30415 / NCIMB 11848 / C-107).